Reading from the N-terminus, the 422-residue chain is 2-(3-amino-3-carboxypropyl)histidine synthase subunit 1 (422 aa).

3 residues coordinate [4Fe-4S] cluster: Cys-128, Cys-234, and Cys-363.

Belongs to the DPH1/DPH2 family. DPH1 subfamily. Component of the 2-(3-amino-3-carboxypropyl)histidine synthase complex composed of DPH1, DPH2, DPH3 and a NADH-dependent reductase, predominantly CBR1. It depends on [4Fe-4S] cluster as a cofactor.

The protein resides in the cytoplasm. It catalyses the reaction L-histidyl-[translation elongation factor 2] + S-adenosyl-L-methionine = 2-[(3S)-amino-3-carboxypropyl]-L-histidyl-[translation elongation factor 2] + S-methyl-5'-thioadenosine + H(+). The protein operates within protein modification; peptidyl-diphthamide biosynthesis. Catalyzes the first step of diphthamide biosynthesis, a post-translational modification of histidine which occurs in elongation factor 2. DPH1 and DPH2 transfer a 3-amino-3-carboxypropyl (ACP) group from S-adenosyl-L-methionine (SAM) to a histidine residue, the reaction is assisted by a reduction system comprising DPH3 and a NADH-dependent reductase, predominantly CBR1. This Kluyveromyces lactis (strain ATCC 8585 / CBS 2359 / DSM 70799 / NBRC 1267 / NRRL Y-1140 / WM37) (Yeast) protein is 2-(3-amino-3-carboxypropyl)histidine synthase subunit 1 (DPH1).